A 265-amino-acid chain; its full sequence is NAD kinase 2 (265 aa).

Asn-51 serves as the catalytic Proton acceptor. NAD(+) is bound by residues 122 to 123, Arg-149, Asp-151, 162 to 167, Ala-186, and Asn-226; these read NE and TAYNKS.

It belongs to the NAD kinase family. A divalent metal cation serves as cofactor.

It localises to the cytoplasm. It catalyses the reaction NAD(+) + ATP = ADP + NADP(+) + H(+). Functionally, involved in the regulation of the intracellular balance of NAD and NADP, and is a key enzyme in the biosynthesis of NADP. Catalyzes specifically the phosphorylation on 2'-hydroxyl of the adenosine moiety of NAD to yield NADP. The protein is NAD kinase 2 of Halalkalibacterium halodurans (strain ATCC BAA-125 / DSM 18197 / FERM 7344 / JCM 9153 / C-125) (Bacillus halodurans).